The sequence spans 252 residues: MVKLLLLNLLASIIFYTSIPLPYIKGLDFQKVARLVPMVGLIIGVILGLLDGGMNYLGMPVLTRSALVVALWIFITGGLHLDGAMDTADGLAVGDPERRLQVMADSATGAFGAMSAIAILLLKTSALTEIGEYRWLVLMAACGWGRWGQQVAIACYPYLKATGKGAFHKQAIRSYKDLLPGLCLMVAVSSLFWLVNNHHLLITVVGLITGSAIASLTAAWFNHKLGGHTGDTYGAVVEWTEALFLCVLTILT.

Transmembrane regions (helical) follow at residues 4–24, 35–55, 65–85, 102–122, 178–198, 201–221, and 232–252; these read LLLLNLLASIIFYTSIPLPYI, LVPMVGLIIGVILGLLDGGMN, SALVVALWIFITGGLHLDGAM, VMADSATGAFGAMSAIAILLL, LLPGLCLMVAVSSLFWLVNNH, LITVVGLITGSAIASLTAAWF, and TYGAVVEWTEALFLCVLTILT.

The protein belongs to the CobS family. Requires Mg(2+) as cofactor.

Its subcellular location is the cell inner membrane. The enzyme catalyses alpha-ribazole + adenosylcob(III)inamide-GDP = adenosylcob(III)alamin + GMP + H(+). It carries out the reaction alpha-ribazole 5'-phosphate + adenosylcob(III)inamide-GDP = adenosylcob(III)alamin 5'-phosphate + GMP + H(+). Its pathway is cofactor biosynthesis; adenosylcobalamin biosynthesis; adenosylcobalamin from cob(II)yrinate a,c-diamide: step 7/7. Its function is as follows. Joins adenosylcobinamide-GDP and alpha-ribazole to generate adenosylcobalamin (Ado-cobalamin). Also synthesizes adenosylcobalamin 5'-phosphate from adenosylcobinamide-GDP and alpha-ribazole 5'-phosphate. The sequence is that of Adenosylcobinamide-GDP ribazoletransferase from Trichormus variabilis (strain ATCC 29413 / PCC 7937) (Anabaena variabilis).